The following is a 409-amino-acid chain: Methylthioribose-1-phosphate isomerase (409 aa).

Catalysis depends on Asp-277, which acts as the Proton donor.

The protein belongs to the eIF-2B alpha/beta/delta subunits family. MtnA subfamily.

The protein localises to the cytoplasm. Its subcellular location is the nucleus. It carries out the reaction 5-(methylsulfanyl)-alpha-D-ribose 1-phosphate = 5-(methylsulfanyl)-D-ribulose 1-phosphate. It functions in the pathway amino-acid biosynthesis; L-methionine biosynthesis via salvage pathway; L-methionine from S-methyl-5-thio-alpha-D-ribose 1-phosphate: step 1/6. In terms of biological role, catalyzes the interconversion of methylthioribose-1-phosphate (MTR-1-P) into methylthioribulose-1-phosphate (MTRu-1-P). The chain is Methylthioribose-1-phosphate isomerase from Scheffersomyces stipitis (strain ATCC 58785 / CBS 6054 / NBRC 10063 / NRRL Y-11545) (Yeast).